Consider the following 521-residue polypeptide: Cytochrome P450 1A1 (521 aa).

Phe229 is a substrate binding site. Residue Cys463 participates in heme binding.

Belongs to the cytochrome P450 family. The cofactor is heme.

Its subcellular location is the endoplasmic reticulum membrane. It localises to the microsome membrane. It catalyses the reaction an organic molecule + reduced [NADPH--hemoprotein reductase] + O2 = an alcohol + oxidized [NADPH--hemoprotein reductase] + H2O + H(+). Cytochromes P450 are a group of heme-thiolate monooxygenases. They oxidize a variety of structurally unrelated compounds, including steroids, fatty acids, and xenobiotics. The sequence is that of Cytochrome P450 1A1 (cyp1a1) from Opsanus tau (Oyster toadfish).